Consider the following 422-residue polypeptide: UPF0229 protein SO_2883 (422 aa).

Residues 60–111 form a disordered region; it reads SEPMFHQGKGGVRDRVHPGNDQFTRGDKIDRPQGGSGGGAGKGDASDSGEGN. A compositionally biased stretch (basic and acidic residues) spans 70–90; sequence GVRDRVHPGNDQFTRGDKIDR.

It belongs to the UPF0229 family.

The protein is UPF0229 protein SO_2883 of Shewanella oneidensis (strain ATCC 700550 / JCM 31522 / CIP 106686 / LMG 19005 / NCIMB 14063 / MR-1).